Consider the following 331-residue polypeptide: N-arachidonyl glycine receptor (331 aa).

Over 1-26 the chain is Extracellular; sequence MAIPSNRDQLALSNGSHPEEYKIAAL. N14 carries N-linked (GlcNAc...) asparagine glycosylation. Residues 27–47 traverse the membrane as a helical segment; that stretch reads VFYSCIFLIGLLVNVTALWVF. The Cytoplasmic segment spans residues 48–56; the sequence is SCTTKKRTT. A helical membrane pass occupies residues 57–77; that stretch reads VTIYMMNVALLDLVFILSLPF. The Extracellular segment spans residues 78 to 95; sequence RMFYYAKGEWPFGDYFCH. Residues C94 and C172 are joined by a disulfide bond. Residues 96 to 116 traverse the membrane as a helical segment; the sequence is ILGALVVFYPSLALWLLALIS. The Cytoplasmic portion of the chain corresponds to 117–138; it reads ADRYMAIVQPKYAKELKNTGKA. The helical transmembrane segment at 139–159 threads the bilayer; the sequence is VLACVGVWIMTLTTTVPLLLL. Residues 160–191 are Extracellular-facing; sequence DEDPDKASSPATCLKISDIIHLKAVNVLNFTR. N188 carries an N-linked (GlcNAc...) asparagine glycan. The chain crosses the membrane as a helical span at residues 192–212; the sequence is LIFFFLIPLFIMIGCYVVIIH. The Cytoplasmic portion of the chain corresponds to 213 to 236; it reads SLLRGQTSKLKPKVKEKSIRIIVT. The helical transmembrane segment at 237–257 threads the bilayer; the sequence is LLLQVLACFVPFHICFALLML. The Extracellular portion of the chain corresponds to 258–268; the sequence is QGEENSYSPWG. The helical transmembrane segment at 269 to 289 threads the bilayer; sequence AFTTFLMNLSTCLDVVLYYIV. Topologically, residues 290-331 are cytoplasmic; it reads SKQFQARVISVMLYRNYLRSVRRKSVRSGSLRSLSNMNSEML. S322 bears the Phosphoserine mark.

This sequence belongs to the G-protein coupled receptor 1 family. As to expression, expressed in testis, spleen and brain (at protein level).

It localises to the cell membrane. Its subcellular location is the cytoplasmic vesicle membrane. G protein-coupled receptor (GPCR) that plays a role in diverse physiological processes particularly within the immune and nervous systems. Becomes active when triggered by various endogenous ligands including endocannabinoid N-arachidonyl glycine (NAGly), delta-9-tetrahydrocannabinol or resolvin D2/RvD2 derived from the omega-3 fatty acid docosahexaenoic acid (DHA). Upon RvD2 binding, facilitates the resolution of inflammation, aiding in tissue repair and homeostasis. Mechanistically, RvD2 ligation initiates Galphas protein coupling, activation of cAMP-PKA signaling pathway and phosphorylation of STAT3, leading to RvD2-stimulated macrophage phagocytosis. Mediates NAGly-induced process of reorganization of actin filaments and induction of acrosomal exocytosis. Activation by N-arachidonoyl glycine (NAGly) can also induce apoptosis in macrophages. Plays a role in homeostasis of CD8+ subsets of intraepithelial lymphocytes (IELs) (CD8alphaalpha and CD8alphabeta IELs) in small intestine by supporting preferential migration of CD8alphaalpha T-cells to intraepithelial compartment over lamina propria compartment, and by mediating their reconstitution into small intestine after bone marrow transplant. Participates also in hypotensive responses, mediating reduction in intraocular and blood pressure. The sequence is that of N-arachidonyl glycine receptor from Rattus norvegicus (Rat).